Here is a 349-residue protein sequence, read N- to C-terminus: Twinfilin-2 (349 aa).

ADF-H domains follow at residues Gln-4–Ser-139 and Gly-177–His-313. The interval Ala-324–Ser-349 is disordered.

The protein belongs to the actin-binding proteins ADF family. Twinfilin subfamily. Interacts with G-actin; ADP-actin form and capping protein (CP).

The protein resides in the cytoplasm. Its subcellular location is the cytoskeleton. The protein localises to the perinuclear region. Functionally, actin-binding protein involved in motile and morphological processes. Inhibits actin polymerization, likely by sequestering G-actin. The chain is Twinfilin-2 (TWF2) from Gallus gallus (Chicken).